The primary structure comprises 66 residues: Small ribosomal subunit protein bS21 (66 aa).

The protein belongs to the bacterial ribosomal protein bS21 family.

In Maridesulfovibrio salexigens (strain ATCC 14822 / DSM 2638 / NCIMB 8403 / VKM B-1763) (Desulfovibrio salexigens), this protein is Small ribosomal subunit protein bS21.